Consider the following 1508-residue polypeptide: ABC-type transporter oblD (1508 aa).

2 disordered regions span residues 1-35 and 54-82; these read MSLG…LTNN and KYTQ…PNGG. A compositionally biased stretch (polar residues) spans 11–24; the sequence is TPNSVMPSDASLHN. 2 N-linked (GlcNAc...) asparagine glycosylation sites follow: Asn24 and Asn35. Polar residues predominate over residues 55-68; that stretch reads YTQNSVYSTTSQNP. Asn83, Asn231, and Asn314 each carry an N-linked (GlcNAc...) asparagine glycan. One can recognise an ABC transporter 1 domain in the interval 136–390; it reads LEAVGLVRKL…FLNMGFVCPD (255 aa). The next 5 membrane-spanning stretches (helical) occupy residues 501–521, 536–556, 610–630, 643–663, and 752–772; these read ITIS…SMFF, LLFF…LTLY, GNFF…SMFF, ALPF…FTIP, and GIIF…SDFI. Residues 828–1070 form the ABC transporter 2 domain; that stretch reads FQWKDICYDI…ILIDYFTRNG (243 aa). 864–871 is a binding site for ATP; that stretch reads GVSGAGKT. Helical transmembrane passes span 1172 to 1192, 1206 to 1226, 1296 to 1316, and 1322 to 1342; these read YIYS…FSLY, FAIF…MPHF, LFVW…IAAL, and AGNM…ILTT. A glycan (N-linked (GlcNAc...) asparagine) is linked at Asn1390. The helical transmembrane segment at 1443-1463 threads the bilayer; that stretch reads FGLMWVFVVFNAFAACGLYYW.

Belongs to the ABC transporter superfamily. ABCG family. PDR (TC 3.A.1.205) subfamily.

It localises to the cell membrane. Its function is as follows. ABC-type transporter; part of the gene cluster that mediates the biosynthesis of the sesterterpenes ophiobolins, fungal phytotoxins with potential anti-cancer activities. Acts as a specific transporter involved in ophiobolins secretion. The chain is ABC-type transporter oblD from Cochliobolus heterostrophus (strain C5 / ATCC 48332 / race O) (Southern corn leaf blight fungus).